Consider the following 350-residue polypeptide: Ribosome production factor 2 homolog (350 aa).

Positions 28 to 266 (KTCLFLRGTT…LGRMREPDPA (239 aa)) constitute a Brix domain. A compositionally biased stretch (polar residues) spans 192–202 (PTSSTSTNNDG). 2 disordered regions span residues 192–219 (PTSS…SIDP) and 301–350 (MGKT…KVKG).

This sequence belongs to the RPF2 family. Component of a hexameric 5S RNP precursor complex, composed of 5S RNA, RRS1, RPF2, RPL5, RPL11 and SYO1; this complex acts as a precursor for ribosome assembly.

It localises to the nucleus. The protein localises to the nucleolus. Functionally, involved in ribosomal large subunit assembly. In Chaetomium thermophilum (strain DSM 1495 / CBS 144.50 / IMI 039719) (Thermochaetoides thermophila), this protein is Ribosome production factor 2 homolog.